Here is a 369-residue protein sequence, read N- to C-terminus: Ubiquinone biosynthesis protein COQ4, mitochondrial (369 aa).

A mitochondrion-targeting transit peptide spans 1-35 (MLTSQKVSRVLLHSSFLKTPVSTQSRSFVFTTIAT). 4 residues coordinate Zn(2+): His212, Asp213, His216, and Glu228. The segment covering 329 to 360 (AAAAATVTQRQRQQQRATATAANATSASSANV) has biased composition (low complexity). The segment at 329 to 369 (AAAAATVTQRQRQQQRATATAANATSASSANVKPSNTAGAM) is disordered.

This sequence belongs to the COQ4 family. In terms of assembly, component of a multi-subunit COQ enzyme complex, composed of at least COQ3, COQ4, COQ5, COQ6, COQ7 and COQ9. It depends on Zn(2+) as a cofactor.

The protein resides in the mitochondrion inner membrane. The enzyme catalyses a 4-hydroxy-3-methoxy-5-(all-trans-polyprenyl)benzoate + H(+) = a 2-methoxy-6-(all-trans-polyprenyl)phenol + CO2. It functions in the pathway cofactor biosynthesis; ubiquinone biosynthesis. Lyase that catalyzes the C1-decarboxylation of 4-hydroxy-3-methoxy-5-(all-trans-polyprenyl)benzoic acid into 2-methoxy-6-(all-trans-polyprenyl)phenol during ubiquinone biosynthesis. In Lodderomyces elongisporus (strain ATCC 11503 / CBS 2605 / JCM 1781 / NBRC 1676 / NRRL YB-4239) (Yeast), this protein is Ubiquinone biosynthesis protein COQ4, mitochondrial.